Here is a 208-residue protein sequence, read N- to C-terminus: Glutathione S-transferase P (208 aa).

The 78-residue stretch at 1 to 78 (MTLKLTYFDI…HLARLNGLNG (78 aa)) folds into the GST N-terminal domain. Glutathione-binding positions include tyrosine 7, tryptophan 38, lysine 42, 49-50 (QV), and 62-63 (QS). The GST C-terminal domain maps to 80 to 202 (NETETTFIDM…NKRAAINPPV (123 aa)).

The protein belongs to the GST superfamily. Pi family. As to quaternary structure, homodimer. As to expression, expressed in dopaminergic (DA) neuron (at protein levels).

The enzyme catalyses RX + glutathione = an S-substituted glutathione + a halide anion + H(+). Conjugation of reduced glutathione to a wide number of exogenous and endogenous hydrophobic electrophiles. Prevents dopaminergic CEP neuron degeneration in response to Mn(2+). The chain is Glutathione S-transferase P (gst-1) from Caenorhabditis elegans.